We begin with the raw amino-acid sequence, 284 residues long: uncharacterized protein (284 aa).

N-linked (GlcNAc...) asparagine; by host glycans are attached at residues Asn79, Asn102, Asn111, Asn147, Asn162, Asn174, Asn196, Asn211, Asn228, and Asn234. Residues 239–259 (AFTYGSWGVAMLLFAAVMVLV) traverse the membrane as a helical segment.

It belongs to the RL11 family.

The protein resides in the membrane. This is an uncharacterized protein from Human cytomegalovirus (strain AD169) (HHV-5).